A 361-amino-acid chain; its full sequence is Chorismate synthase (361 aa).

NADP(+) is bound by residues Arg48 and Arg54. FMN contacts are provided by residues 125-127, 238-239, Gly278, 293-297, and Arg319; these read RSS, NA, and KPTSS.

It belongs to the chorismate synthase family. In terms of assembly, homotetramer. It depends on FMNH2 as a cofactor.

It carries out the reaction 5-O-(1-carboxyvinyl)-3-phosphoshikimate = chorismate + phosphate. Its pathway is metabolic intermediate biosynthesis; chorismate biosynthesis; chorismate from D-erythrose 4-phosphate and phosphoenolpyruvate: step 7/7. Functionally, catalyzes the anti-1,4-elimination of the C-3 phosphate and the C-6 proR hydrogen from 5-enolpyruvylshikimate-3-phosphate (EPSP) to yield chorismate, which is the branch point compound that serves as the starting substrate for the three terminal pathways of aromatic amino acid biosynthesis. This reaction introduces a second double bond into the aromatic ring system. In Salmonella typhi, this protein is Chorismate synthase.